The following is a 286-amino-acid chain: Beta-lactamase SHV-34 (286 aa).

The signal sequence occupies residues 1 to 21; the sequence is MRYFRLCIISLLATLPLAVHA. Ser-66 acts as the Acyl-ester intermediate in catalysis. Residues Cys-73 and Cys-119 are joined by a disulfide bond. Residue Glu-164 is the Proton acceptor of the active site. Substrate is bound at residue 230-232; the sequence is KTG.

This sequence belongs to the class-A beta-lactamase family.

The catalysed reaction is a beta-lactam + H2O = a substituted beta-amino acid. Hydrolyzes ceftazidime and cefotaxime. The sequence is that of Beta-lactamase SHV-34 (bla) from Escherichia coli.